Reading from the N-terminus, the 78-residue chain is Small ribosomal subunit protein bS18 (78 aa).

It belongs to the bacterial ribosomal protein bS18 family. Part of the 30S ribosomal subunit. Forms a tight heterodimer with protein bS6.

In terms of biological role, binds as a heterodimer with protein bS6 to the central domain of the 16S rRNA, where it helps stabilize the platform of the 30S subunit. This Nocardioides sp. (strain ATCC BAA-499 / JS614) protein is Small ribosomal subunit protein bS18.